A 182-amino-acid chain; its full sequence is Dual-action ribosomal maturation protein DarP (182 aa).

The protein belongs to the DarP family.

It localises to the cytoplasm. In terms of biological role, member of a network of 50S ribosomal subunit biogenesis factors which assembles along the 30S-50S interface, preventing incorrect 23S rRNA structures from forming. Promotes peptidyl transferase center (PTC) maturation. The sequence is that of Dual-action ribosomal maturation protein DarP from Yersinia pseudotuberculosis serotype O:1b (strain IP 31758).